The chain runs to 955 residues: Glycine dehydrogenase (decarboxylating) (955 aa).

N6-(pyridoxal phosphate)lysine is present on Lys-702.

Belongs to the GcvP family. The glycine cleavage system is composed of four proteins: P, T, L and H. The cofactor is pyridoxal 5'-phosphate.

The enzyme catalyses N(6)-[(R)-lipoyl]-L-lysyl-[glycine-cleavage complex H protein] + glycine + H(+) = N(6)-[(R)-S(8)-aminomethyldihydrolipoyl]-L-lysyl-[glycine-cleavage complex H protein] + CO2. In terms of biological role, the glycine cleavage system catalyzes the degradation of glycine. The P protein binds the alpha-amino group of glycine through its pyridoxal phosphate cofactor; CO(2) is released and the remaining methylamine moiety is then transferred to the lipoamide cofactor of the H protein. The sequence is that of Glycine dehydrogenase (decarboxylating) from Bradyrhizobium diazoefficiens (strain JCM 10833 / BCRC 13528 / IAM 13628 / NBRC 14792 / USDA 110).